Here is a 342-residue protein sequence, read N- to C-terminus: 4-hydroxythreonine-4-phosphate dehydrogenase (342 aa).

Substrate is bound by residues His-139 and Thr-140. The a divalent metal cation site is built by His-174, His-219, and His-274. Residues Lys-282, Asn-291, and Arg-300 each coordinate substrate.

It belongs to the PdxA family. Homodimer. Requires Zn(2+) as cofactor. It depends on Mg(2+) as a cofactor. The cofactor is Co(2+).

It is found in the cytoplasm. The enzyme catalyses 4-(phosphooxy)-L-threonine + NAD(+) = 3-amino-2-oxopropyl phosphate + CO2 + NADH. The protein operates within cofactor biosynthesis; pyridoxine 5'-phosphate biosynthesis; pyridoxine 5'-phosphate from D-erythrose 4-phosphate: step 4/5. Catalyzes the NAD(P)-dependent oxidation of 4-(phosphooxy)-L-threonine (HTP) into 2-amino-3-oxo-4-(phosphooxy)butyric acid which spontaneously decarboxylates to form 3-amino-2-oxopropyl phosphate (AHAP). The sequence is that of 4-hydroxythreonine-4-phosphate dehydrogenase from Mesorhizobium japonicum (strain LMG 29417 / CECT 9101 / MAFF 303099) (Mesorhizobium loti (strain MAFF 303099)).